We begin with the raw amino-acid sequence, 602 residues long: MGMWLVWIFALDNILCASKEEEKKCELPRRLGEMNIKEITEKVEIDGLDTKIIIPFIFHDAKPVVSPITRYRDISQEERRYVEEIIKGLPKLVWDSMVWIYVPGYTWWIKSLMDNVFNATSFEGFNPVDLYKKAKGKSEIRFADLVMSIFRFNGRIVNRFGQRLVREVEVKIKEMSNEMPSSEKKEKEERLNQILEYGKKLCTREKQEEMLKAQKIVCDACVYLWEKGSEDRVAITIMVYLRNLEVQMIRSSMKKVKVGEPLTFYMNHEVLISAYKEYKIGVAGELVKQVLKNDKDIDSESVNRVVCSIREREEDERKRAEAESARNREELLRMEEREKGKEKGSKGKGRKKRGKKGAGEAKEESKEEDRGGEEEESVEADVPVEEMAVGGARPKKKSPKEESKGEERCYKVHKRVLRWMKSAERIKYELDNGEEEKWRGRSIEEIEEQKALHDIIEVLKLLRSKECDKFFVRTGKYMKGGSERWNMVGVGILEEGGKKRVGNVEVGLFEGKGGENIIYHLMFKPTDFEEEGEGARPSFGRCDGVDAIEEGRISDMSGFQYPPGVRSEITSSGSEFRIVWKNQRDTSLVLRSLTVLRIPEIR.

The span at 313–345 shows a compositional bias: basic and acidic residues; that stretch reads EEDERKRAEAESARNREELLRMEEREKGKEKGS. The interval 313–407 is disordered; sequence EEDERKRAEA…SPKEESKGEE (95 aa). The segment covering 346–356 has biased composition (basic residues); that stretch reads KGKGRKKRGKK. The segment covering 357–369 has biased composition (basic and acidic residues); that stretch reads GAGEAKEESKEED. Residues 370–384 show a composition bias toward acidic residues; it reads RGGEEEESVEADVPV.

Belongs to the UPF0329 family.

This chain is UPF0329 protein ECU02_0060, found in Encephalitozoon cuniculi (strain GB-M1) (Microsporidian parasite).